The chain runs to 164 residues: MVDDSTRKTLSNIPLLQIRAGPREKDVWVQRLKEEYHALIMYVKNNKQSGSDWFRLESNKEGTKWFGKCWYMHNLLKYEFDVEFDIPVTYPTTAPEIALPELDGKTAKMYRGGKICLTDHFKPLWARNVPKFGIAHAMALGLAPWLAVEVPDLIEKGIITYKEK.

C116 (glycyl thioester intermediate) is an active-site residue.

Belongs to the ubiquitin-conjugating enzyme family. UFC1 subfamily.

Functionally, E2-like enzyme which forms an intermediate with UFM1 via a thioester linkage. The chain is Ubiquitin-fold modifier-conjugating enzyme 1 from Drosophila persimilis (Fruit fly).